Consider the following 80-residue polypeptide: MSTAIWILLLIVALGVGVFGGIFIARKQIEKEIGEHPRLTPEAIREMMSQMGQKPSEAKIQQTYRNIIKQSKAAVSKGKK.

Residues 4–24 (AIWILLLIVALGVGVFGGIFI) traverse the membrane as a helical segment.

It belongs to the UPF0154 family.

Its subcellular location is the cell membrane. The chain is UPF0154 protein MGAS10270_Spy0296 from Streptococcus pyogenes serotype M2 (strain MGAS10270).